Here is a 259-residue protein sequence, read N- to C-terminus: MRNSFITLIFLLLLSGCSEEKEKVVEQESSESITPAQASTSDENNNQTTETTTPAVITPAVQEQIEQKPEVKTFKVTFKIDENDMVLGNKDSKIVVVEYFSPTCPHCAYYHSTIFPELKQKYIDTNKIAYVTREFIATKQDLDASILARCKGDINSFMLFHDIILKQQDKWSVSNKYRELLTDIGQLGGVTPEEYKKCLSDDKITETLIANTNFITKAPKFIGTPSFFVNGVQTENYSINSISAAIDKAIEESKNKIDL.

A signal peptide spans 1–20; it reads MRNSFITLIFLLLLSGCSEE. A disordered region spans residues 25–54; that stretch reads VEQESSESITPAQASTSDENNNQTTETTTP. A compositionally biased stretch (polar residues) spans 33-42; sequence ITPAQASTSD. The span at 43–54 shows a compositional bias: low complexity; it reads ENNNQTTETTTP. The Thioredoxin domain maps to 47 to 251; that stretch reads QTTETTTPAV…ISAAIDKAIE (205 aa). A disulfide bridge links Cys104 with Cys107.

Belongs to the thioredoxin family. DsbA subfamily.

It is found in the periplasm. May be required for disulfide bond formation in some proteins. This chain is Putative protein-disulfide oxidoreductase RBE_1288, found in Rickettsia bellii (strain RML369-C).